A 340-amino-acid chain; its full sequence is Methionine import ATP-binding protein MetN 2 (340 aa).

One can recognise an ABC transporter domain in the interval 2-241 (ITLQNVVKEY…PQEKVTQRFV (240 aa)). 38 to 45 (GYSGAGKS) lines the ATP pocket.

Belongs to the ABC transporter superfamily. Methionine importer (TC 3.A.1.24) family. In terms of assembly, the complex is composed of two ATP-binding proteins (MetN), two transmembrane proteins (MetI) and a solute-binding protein (MetQ).

The protein resides in the cell membrane. The enzyme catalyses L-methionine(out) + ATP + H2O = L-methionine(in) + ADP + phosphate + H(+). The catalysed reaction is D-methionine(out) + ATP + H2O = D-methionine(in) + ADP + phosphate + H(+). Functionally, part of the ABC transporter complex MetNIQ involved in methionine import. Responsible for energy coupling to the transport system. The polypeptide is Methionine import ATP-binding protein MetN 2 (Listeria monocytogenes serotype 4b (strain F2365)).